Consider the following 316-residue polypeptide: Cuticle collagen 13 (316 aa).

The N-terminal stretch at 1 to 36 (MSEDLKQIAQETESLRKVAFFGIAVSTIATLTAIIA) is a signal peptide. Composition is skewed to low complexity over residues 127-157 (SGAAGPAGSPGQDGAPGNDGAPGAPGNPGQD) and 183-204 (APGQKGPSGAPGAPGQSGGAAL). Residues 127-316 (SGAAGPAGSP…CPPPRTAPGY (190 aa)) form a disordered region. Triple-helical region regions lie at residues 128–157 (GAAGPAGSPGQDGAPGNDGAPGAPGNPGQD), 176–202 (GPPGPSGAPGQKGPSGAPGAPGQSGGA), 206–235 (GPPGPAGPPGPAGQPGSNGNAGAPGAPGQV), 240–266 (GTPGPAGPPGSPGPAGAPGQPGQAGSS), and 269–304 (GGPGPQGDAGAPGAPGAPGQAGAPGQDGESGSEGAC). Residues 205-217 (PGPPGPAGPPGPA) are compositionally biased toward pro residues. Over residues 219–234 (QPGSNGNAGAPGAPGQ) the composition is skewed to low complexity. The segment covering 241-251 (TPGPAGPPGSP) has biased composition (pro residues). 2 stretches are compositionally biased toward low complexity: residues 256-266 (APGQPGQAGSS) and 276-295 (DAGAPGAPGAPGQAGAPGQD). Residues 307–316 (CPPPRTAPGY) show a composition bias toward pro residues.

It belongs to the cuticular collagen family. As to quaternary structure, collagen polypeptide chains are complexed within the cuticle by disulfide bonds and other types of covalent cross-links.

Its function is as follows. Nematode cuticles are composed largely of collagen-like proteins. The cuticle functions both as an exoskeleton and as a barrier to protect the worm from its environment. The sequence is that of Cuticle collagen 13 (col-13) from Caenorhabditis elegans.